A 637-amino-acid polypeptide reads, in one-letter code: tRNA uridine 5-carboxymethylaminomethyl modification enzyme MnmG (637 aa).

18–23 (GAGHAG) is a binding site for FAD. Residue 281 to 295 (GPRYCPSIEDKIVRF) participates in NAD(+) binding.

Belongs to the MnmG family. In terms of assembly, homodimer. Heterotetramer of two MnmE and two MnmG subunits. Requires FAD as cofactor.

The protein resides in the cytoplasm. In terms of biological role, NAD-binding protein involved in the addition of a carboxymethylaminomethyl (cmnm) group at the wobble position (U34) of certain tRNAs, forming tRNA-cmnm(5)s(2)U34. This chain is tRNA uridine 5-carboxymethylaminomethyl modification enzyme MnmG, found in Ligilactobacillus salivarius (strain UCC118) (Lactobacillus salivarius).